Here is a 266-residue protein sequence, read N- to C-terminus: Phage-like element PBSX protein XkdC (266 aa).

An ATP-binding site is contributed by 124-131; sequence GQPGSGKT.

It to B.subtilis YqaM.

In terms of biological role, may function as a transcriptional antiterminator. The chain is Phage-like element PBSX protein XkdC (xkdC) from Bacillus subtilis (strain 168).